Here is a 107-residue protein sequence, read N- to C-terminus: Basic phospholipase A2 sphenotoxin subunit B (107 aa).

Ca(2+) is bound by residues tyrosine 27, glycine 29, and glycine 31. Cystine bridges form between cysteine 28–cysteine 44, cysteine 43–cysteine 91, cysteine 50–cysteine 88, cysteine 57–cysteine 81, and cysteine 75–cysteine 86. Histidine 47 is an active-site residue. Position 48 (aspartate 48) interacts with Ca(2+). Residue aspartate 89 is part of the active site.

It belongs to the phospholipase A2 family. Group II subfamily. D49 sub-subfamily. In terms of assembly, heterodimer of A and B chains; non-covalently linked. The acidic protein (B chain) has phospholipase A2 activity and the A chain weakly inhibits the B chain enzymatic activity but potentiates its lethal potency. Expressed by the venom gland.

Its subcellular location is the secreted. It carries out the reaction a 1,2-diacyl-sn-glycero-3-phosphocholine + H2O = a 1-acyl-sn-glycero-3-phosphocholine + a fatty acid + H(+). In terms of biological role, heterodimer A-B: Sphenotoxin is a potent neurotoxin that possesses phospholipase A2 (PLA2) activity. It consists of a non-covalent association of a basic PLA2 subunit B with a non-enzymatic subunit A. Functionally, monomer B: Not found in vivo. In vitro, potent neurotoxin that possesses phospholipase A2 (PLA2) activity and exerts a lethal action by blocking neuromuscular transmission. Induces paralysis of the hind legs and neuromuscular blockade in mouse phrenic nerve-diaphragm preparations. PLA2 catalyzes the calcium-dependent hydrolysis of the 2-acyl groups in 3-sn-phosphoglycerides. The sequence is that of Basic phospholipase A2 sphenotoxin subunit B from Ophryacus sphenophrys (Broad-horned pitviper).